The chain runs to 387 residues: Sulfate adenylyltransferase (387 aa).

The protein belongs to the sulfate adenylyltransferase family.

The catalysed reaction is sulfate + ATP + H(+) = adenosine 5'-phosphosulfate + diphosphate. It functions in the pathway sulfur metabolism; hydrogen sulfide biosynthesis; sulfite from sulfate: step 1/3. This Deinococcus radiodurans (strain ATCC 13939 / DSM 20539 / JCM 16871 / CCUG 27074 / LMG 4051 / NBRC 15346 / NCIMB 9279 / VKM B-1422 / R1) protein is Sulfate adenylyltransferase (sat).